Here is a 352-residue protein sequence, read N- to C-terminus: Rhodopsin, freshwater form (352 aa).

Residues 1–36 (MNGTEGPNFYVPMSNVTGVVRSPFEYPQYYLAEPWA) are Extracellular-facing. N-linked (GlcNAc...) asparagine glycans are attached at residues Asn-2 and Asn-15. Residues 37-61 (YSALAAYMFFLIIAGFPINFLTLYV) traverse the membrane as a helical segment. At 62-73 (TIEHKKLRTPLN) the chain is on the cytoplasmic side. A helical transmembrane segment spans residues 74–98 (YILLNLAVADLFMVFGGFTTTMYTS). The Extracellular portion of the chain corresponds to 99-113 (MHGYFVFGPTGCNIE). Cys-110 and Cys-187 form a disulfide bridge. Residues 114–133 (GFFATLGGEIALWCLVVLAV) traverse the membrane as a helical segment. Topologically, residues 134 to 152 (ERWMVVCKPMSNFRFGENH) are cytoplasmic. A helical membrane pass occupies residues 153–176 (AIMGVAFTWVMALACAAPPLFGWS). The Extracellular portion of the chain corresponds to 177-202 (RYIPEGMQCSCGMDHYAPNPETYNES). The N-linked (GlcNAc...) asparagine glycan is linked to Asn-200. A helical transmembrane segment spans residues 203 to 230 (FVIYMFICHFTIPLTVISFCYGRLVCTV). At 231–252 (KEATAQQQESETTQRAEREVTR) the chain is on the cytoplasmic side. The chain crosses the membrane as a helical span at residues 253 to 276 (MVIIMVISFLVCWVPYASVAWYIF). The Extracellular portion of the chain corresponds to 277–284 (THQGSSFG). A helical transmembrane segment spans residues 285-309 (PIFMTIPAFFAKSSSLYNPLIYICM). Lys-296 is modified (N6-(retinylidene)lysine). Topologically, residues 310 to 352 (NKQSRNCMITTLCCGKNPFEEEEGASTTASKTEASSVSSVSPA) are cytoplasmic. Cys-323 carries S-palmitoyl cysteine lipidation. The segment at 330–352 (EEEGASTTASKTEASSVSSVSPA) is disordered. Positions 334-352 (ASTTASKTEASSVSSVSPA) are enriched in low complexity.

Belongs to the G-protein coupled receptor 1 family. Opsin subfamily. Phosphorylated on some or all of the serine and threonine residues present in the C-terminal region. In terms of tissue distribution, rod shaped photoreceptor cells which mediates vision in dim light.

It localises to the membrane. Its function is as follows. Visual pigments such as rhodopsin and porphyropsin are light-absorbing molecules that mediate vision. Rhodopsin consists of an apoprotein, opsin, covalently linked to 11-cis-retinal. This receptor is coupled to the activation of phospholipase C. Porphyropsin consists of opsin covalently linked to 11-cis 3,4-didehydroretinal. The polypeptide is Rhodopsin, freshwater form (Anguilla anguilla (European freshwater eel)).